The sequence spans 248 residues: Protein LIFEGUARD 3 (248 aa).

Transmembrane regions (helical) follow at residues 42 to 62, 74 to 94, 105 to 125, 130 to 150, 165 to 185, 188 to 208, and 222 to 242; these read VYSI…TVVT, GLGL…LCPL, YLLL…TCAF, VILE…LYTF, FLFG…LFPL, VSVM…IVYD, and IWAA…LLTV.

The protein belongs to the BI1 family.

It localises to the membrane. The protein is Protein LIFEGUARD 3 of Arabidopsis thaliana (Mouse-ear cress).